A 358-amino-acid polypeptide reads, in one-letter code: Probable tartrate dehydrogenase/decarboxylase TtuC' (358 aa).

3 residues coordinate Mn(2+): Asp222, Asp246, and Asp250.

It belongs to the isocitrate and isopropylmalate dehydrogenases family. Mg(2+) serves as cofactor. Mn(2+) is required as a cofactor. It depends on K(+) as a cofactor.

It localises to the cytoplasm. It carries out the reaction tartrate + NAD(+) = 2-hydroxy-3-oxosuccinate + NADH + H(+). The enzyme catalyses (2R,3S)-tartrate + NAD(+) = 2-hydroxy-3-oxosuccinate + NADH + H(+). The catalysed reaction is (2R,3R)-tartrate + NAD(+) = 2-hydroxy-3-oxosuccinate + NADH + H(+). It catalyses the reaction (2R,3R)-tartrate + H(+) = (R)-glycerate + CO2. It carries out the reaction (R)-malate + NAD(+) = pyruvate + CO2 + NADH. The protein operates within carbohydrate acid metabolism; tartrate degradation; 2-hydroxy-3-oxosuccinate from L-tartrate: step 1/1. Its pathway is carbohydrate acid metabolism; tartrate degradation; 2-hydroxy-3-oxosuccinate from meso-tartrate: step 1/1. It functions in the pathway carbohydrate acid metabolism; tartrate degradation; D-glycerate from L-tartrate: step 1/1. Has multiple catalytic activities. Apart from catalyzing the oxidation of (+)-tartrate to oxaloglycolate, also converts meso-tartrate to D-glycerate and catalyzes the oxidative decarboxylation of D-malate to pyruvate. The chain is Probable tartrate dehydrogenase/decarboxylase TtuC' (ttuC') from Agrobacterium vitis (Rhizobium vitis).